The following is a 486-amino-acid chain: Bile acid receptor (486 aa).

Residue Lys-132 forms a Glycyl lysine isopeptide (Lys-Gly) (interchain with G-Cter in SUMO1) linkage. The segment at residues 134–209 is a DNA-binding region (nuclear receptor); it reads DELCVVCGDR…MGMLAECMYT (76 aa). An NR C4-type zinc finger spans residues 137-157; sequence CVVCGDRASGYHYNALTCEGC. Phosphoserine; by PKC/PRKCA is present on residues Ser-145 and Ser-164. Position 167 is an N6-acetyllysine; by EP300 (Lys-167). Residues 173-197 form an NR C4-type zinc finger; the sequence is CKNGGNCVMDMYMRRKCQECRLRKC. The residue at position 220 (Lys-220) is an N6-methyllysine; by SETD7. An N6-acetyllysine; by EP300 modification is found at Lys-227. The NR LBD domain maps to 262–486; that stretch reads DQQTLLHFIM…PLLCEIWDVQ (225 aa). A Glycyl lysine isopeptide (Lys-Gly) (interchain with G-Cter in SUMO1) cross-link involves residue Lys-289. Chenodeoxycholate is bound by residues Arg-345, Tyr-375, and Tyr-383. Thr-456 bears the Phosphothreonine; by PKC/PRKCZ mark. A chenodeoxycholate-binding site is contributed by His-461.

The protein belongs to the nuclear hormone receptor family. NR1 subfamily. In terms of assembly, heterodimer (via C-terminus) with RXRA (via DBD); the heterodimerization enhances the binding affinity for LXXLL motifs from coactivators. Binds DNA predominantly as a heterodimer with RXRA. After activation by agonist binding interacts with coactivators. Interacts with NCOA1, NCOA2, PPARGC1A, CARM1, SETD7, PRMT1, GPS2, SMARCA4 and MED1. Interacts with EP300 and SMARCD1. Interacts with XRCC5 and XRCC6; decreasing NR1H4/FXR transactivation activity towards ABCB11/BSEP. Interacts with PAGR1 and NCOA6; indicative for an association with an MLL2/MLL3 complex (ASCOM). Acetylated by EP300. Lys-227 as is the major acetylation site for EP300; the dynamicly regulated acetylation inhibits heterodimerization with RXRA and transactivation activity. Deacetylated by SIRT1. Post-translationally, methylation may increase transactivation of target genes. In terms of processing, phosphorylation by PKC/PRKCA increases transactivation activity by promoting association with PPARGC1A. Sumoylated upon ligand binding. Liver and hepatocyte-related cells express mainly FXRalpha1-type isoforms with isoform 3 and isoform 4 in approximately equal proportions. In intestine and kidney mainly FXRalpha2-type isoforms are expressed with isoform 1 and isoform 2 in approximately equal proportions. Expressed in pancreatic beta cells and macrophages.

Its subcellular location is the nucleus. Functionally, ligand-activated transcription factor. Receptor for bile acids (BAs) such as chenodeoxycholic acid (CDCA), lithocholic acid, deoxycholic acid (DCA) and allocholic acid (ACA). Plays a essential role in BA homeostasis through the regulation of genes involved in BA synthesis, conjugation and enterohepatic circulation. Also regulates lipid and glucose homeostasis and is involved innate immune response. The FXR-RXR heterodimer binds predominantly to farnesoid X receptor response elements (FXREs) containing two inverted repeats of the consensus sequence 5'-AGGTCA-3' in which the monomers are spaced by 1 nucleotide (IR-1) but also to tandem repeat DR1 sites with lower affinity, and can be activated by either FXR or RXR-specific ligands. It is proposed that monomeric nuclear receptors such as NR5A2/LRH-1 bound to coregulatory nuclear responsive element (NRE) halfsites located in close proximity to FXREs modulate transcriptional activity. In the liver activates transcription of the corepressor NR0B2 thereby indirectly inhibiting CYP7A1 and CYP8B1 (involved in BA synthesis) implicating at least in part histone demethylase KDM1A resulting in epigenomic repression, and SLC10A1/NTCP (involved in hepatic uptake of conjugated BAs). Activates transcription of the repressor MAFG (involved in regulation of BA synthesis). Activates transcription of SLC27A5/BACS and BAAT (involved in BA conjugation), ABCB11/BSEP (involved in bile salt export) by directly recruiting histone methyltransferase CARM1, and ABCC2/MRP2 (involved in secretion of conjugated BAs) and ABCB4 (involved in secretion of phosphatidylcholine in the small intestine). Activates transcription of SLC27A5/BACS and BAAT (involved in BA conjugation), ABCB11/BSEP (involved in bile salt export) by directly recruiting histone methyltransferase CARM1, and ABCC2/MRP2 (involved in secretion of conjugated BAs) and ABCB4 (involved in secretion of phosphatidylcholine in the small intestine). In the intestine activates FGF19 expression and secretion leading to hepatic CYP7A1 repression. The function also involves the coordinated induction of hepatic KLB/beta-klotho expression. Regulates transcription of liver UGT2B4 and SULT2A1 involved in BA detoxification; binding to the UGT2B4 promoter seems to imply a monomeric transactivation independent of RXRA. Modulates lipid homeostasis by activating liver NR0B2/SHP-mediated repression of SREBF1 (involved in de novo lipogenesis), expression of PLTP (involved in HDL formation), SCARB1 (involved in HDL hepatic uptake), APOE, APOC1, APOC4, PPARA (involved in beta-oxidation of fatty acids), VLDLR and SDC1 (involved in the hepatic uptake of LDL and IDL remnants), and inhibiting expression of MTTP (involved in VLDL assembly. Increases expression of APOC2 (promoting lipoprotein lipase activity implicated in triglyceride clearance). Transrepresses APOA1 involving a monomeric competition with NR2A1 for binding to a DR1 element. Also reduces triglyceride clearance by inhibiting expression of ANGPTL3 and APOC3 (both involved in inhibition of lipoprotein lipase). Involved in glucose homeostasis by modulating hepatic gluconeogenesis through activation of NR0B2/SHP-mediated repression of respective genes. Modulates glycogen synthesis (inducing phosphorylation of glycogen synthase kinase-3). Modulates glucose-stimulated insulin secretion and is involved in insulin resistance. Involved in intestinal innate immunity. Plays a role in protecting the distal small intestine against bacterial overgrowth and preservation of the epithelial barrier. Down-regulates inflammatory cytokine expression in several types of immune cells including macrophages and mononuclear cells. Mediates trans-repression of TLR4-induced cytokine expression; the function seems to require its sumoylation and prevents N-CoR nuclear receptor corepressor clearance from target genes such as IL1B and NOS2. Involved in the TLR9-mediated protective mechanism in intestinal inflammation. Plays an anti-inflammatory role in liver inflammation; proposed to inhibit pro-inflammatory (but not antiapoptotic) NF-kappa-B signaling). Promotes transcriptional activation of target genes NR0B2/SHP (inducible by unconjugated CDCA), SLC51B/OSTB (inducible by unconjugated CDCA and DCA) and FABP6/IBAP; low activity for ABCB11/BSEP (inducible by unconjugated CDCA, DCA and ACA); not inducible by taurine- and glycine-amidated CDCA. Its function is as follows. Promotes transcriptional activation of target genes ABCB11/BSEP (inducible by unconjugated CDCA, DCA and ACA), NR0B2/SHP (inducible by unconjugated CDCA DCA and ACA), SLC51B/OSTB (inducible by unconjugated CDCA and DCA) and FABP6/IBAP; not inducible by taurine- and glycine-amidated CDCA. In terms of biological role, promotes transcriptional activation of target genes NR0B2/SHP (inducible by unconjugated CDCA), SLC51B/OSTB (inducible by unconjugated CDCA and DCA) and IBAP; low activity for ABCB11/BSEP (inducible by unconjugated CDCA, DCA and ACA); not inducible by taurine- and glycine-amidated CDCA. Functionally, promotes transcriptional activation of target genes ABCB11/BSEP (inducible by unconjugated CDCA, ACA and DCA), NR0B2/SHP (inducible by unconjugated CDCA, ACA and DCA), SLC51B/OSTB (inducible by unconjugated CDCA and DCA) and FABP6/IBAP; most efficient isoform compared to isoforms 1 to 3; not inducible by taurine- and glycine-amidated CDCA. This chain is Bile acid receptor (NR1H4), found in Homo sapiens (Human).